A 757-amino-acid chain; its full sequence is Primary amine oxidase (757 aa).

Residues 1–30 (MGSPSLYSARKTTLALAVALSFAWQAPVFA) form the signal peptide. Substrate-binding positions include 411–422 (YLDSGDYGMGTL) and 493–498 (VGNYDY). The active-site Proton acceptor is Asp413. Tyr496 functions as the Schiff-base intermediate with substrate; via topaquinone in the catalytic mechanism. Tyr496 is modified (2',4',5'-topaquinone). 2 residues coordinate Cu cation: His554 and His556. Ca(2+)-binding residues include Asp563, Leu564, Asp565, Glu603, Tyr697, Asp700, Glu702, Asp708, and Ala709. Asp563 is a binding site for Mn(2+). Mn(2+) is bound at residue Asp565. Positions 680–701 (PEGKYPNRSTHDTGLGQYSKDN) are disordered. Residue Asp708 participates in Mn(2+) binding. His719 serves as a coordination point for Cu cation.

The protein belongs to the copper/topaquinone oxidase family. Homodimer. The cofactor is Cu cation. Zn(2+) is required as a cofactor. Requires Ca(2+) as cofactor. It depends on L-topaquinone as a cofactor. Mn(2+) serves as cofactor. In terms of processing, topaquinone (TPQ) is generated by copper-dependent autoxidation of a specific tyrosyl residue.

The protein resides in the periplasm. It catalyses the reaction a primary methyl amine + O2 + H2O = an aldehyde + H2O2 + NH4(+). It carries out the reaction 2-phenylethylamine + O2 + H2O = 2-phenylacetaldehyde + H2O2 + NH4(+). The protein operates within amino-acid degradation; L-phenylalanine degradation; phenylacetate from L-phenylalanine: step 2/3. Its activity is regulated as follows. Inhibited by 2-hydrazinopyridine. In terms of biological role, the enzyme prefers aromatic over aliphatic amines. In Escherichia coli (strain K12), this protein is Primary amine oxidase (tynA).